The sequence spans 475 residues: Beta-amyrin 16-alpha-hydroxylase CYP87D16 (475 aa).

The helical transmembrane segment at 3–23 (VVGLIGVAVVTILITQYVYKW) threads the bilayer. Residue Cys423 coordinates heme.

It belongs to the cytochrome P450 family. Heme is required as a cofactor.

It localises to the membrane. It catalyses the reaction beta-amyrin + reduced [NADPH--hemoprotein reductase] + O2 = 16alpha-hydroxy-beta-amyrin + oxidized [NADPH--hemoprotein reductase] + H2O + H(+). Its function is as follows. Involved in the biosynthetic pathway of maesasaponins, which are oleanane-type saponins with diverse biological activities. Catalyzes the C-16alpha oxidation of beta-amyrin to form 16alpha-hydroxy-beta-amyrin. The sequence is that of Beta-amyrin 16-alpha-hydroxylase CYP87D16 from Maesa lanceolata (False assegai).